A 430-amino-acid chain; its full sequence is Glutamate-1-semialdehyde 2,1-aminomutase (430 aa).

Position 267 is an N6-(pyridoxal phosphate)lysine (lysine 267).

This sequence belongs to the class-III pyridoxal-phosphate-dependent aminotransferase family. HemL subfamily. In terms of assembly, homodimer. The cofactor is pyridoxal 5'-phosphate.

Its subcellular location is the cytoplasm. It catalyses the reaction (S)-4-amino-5-oxopentanoate = 5-aminolevulinate. Its pathway is porphyrin-containing compound metabolism; protoporphyrin-IX biosynthesis; 5-aminolevulinate from L-glutamyl-tRNA(Glu): step 2/2. The protein is Glutamate-1-semialdehyde 2,1-aminomutase of Anaeromyxobacter sp. (strain K).